A 227-amino-acid polypeptide reads, in one-letter code: ATP-dependent dethiobiotin synthetase BioD (227 aa).

12 to 17 (DVGKTV) serves as a coordination point for ATP. Threonine 16 provides a ligand contact to Mg(2+). Lysine 37 is a catalytic residue. Substrate is bound at residue threonine 41. ATP-binding positions include aspartate 50, 110–113 (EGAG), 171–172 (GS), and 201–203 (PAG). Mg(2+) is bound by residues aspartate 50 and glutamate 110.

It belongs to the dethiobiotin synthetase family. Homodimer. Mg(2+) serves as cofactor.

The protein localises to the cytoplasm. It catalyses the reaction (7R,8S)-7,8-diammoniononanoate + CO2 + ATP = (4R,5S)-dethiobiotin + ADP + phosphate + 3 H(+). It participates in cofactor biosynthesis; biotin biosynthesis; biotin from 7,8-diaminononanoate: step 1/2. Functionally, catalyzes a mechanistically unusual reaction, the ATP-dependent insertion of CO2 between the N7 and N8 nitrogen atoms of 7,8-diaminopelargonic acid (DAPA, also called 7,8-diammoniononanoate) to form a ureido ring. The sequence is that of ATP-dependent dethiobiotin synthetase BioD from Rhodococcus erythropolis (strain PR4 / NBRC 100887).